A 490-amino-acid chain; its full sequence is Bifunctional NAD(P)H-hydrate repair enzyme Nnr (490 aa).

The YjeF N-terminal domain maps to 1–204 (MKEIDELTIK…NIGHPVHLIN (204 aa)). Positions 1 to 204 (MKEIDELTIK…NIGHPVHLIN (204 aa)) are NAD(P)H-hydrate epimerase. Residues 51–55 (NNGGD) form an NADPHX 1; for epimerase activity region. K(+) is bound by residues N52 and D114. Positions 118 to 124 (GTGLRGE) are NADPHX 1; for epimerase activity. Positions 129 and 147 each coordinate (6S)-NADPHX. S150 is a binding site for K(+). In terms of domain architecture, YjeF C-terminal spans 212 to 488 (TREMVRSLLP…RLIPEAIRRL (277 aa)). Positions 212–490 (TREMVRSLLP…IPEAIRRLKE (279 aa)) are ADP-dependent (S)-NAD(P)H-hydrate dehydratase. (6S)-NADPHX is bound at residue G317. Positions 366–372 (HPGEMAR) are NADPHX 2; for dehydratase activity. ADP contacts are provided by residues 402–406 (KSATT) and 421–430 (NTGLSKGGSG). Residue D431 coordinates (6S)-NADPHX.

This sequence in the N-terminal section; belongs to the NnrE/AIBP family. The protein in the C-terminal section; belongs to the NnrD/CARKD family. The cofactor is K(+).

The catalysed reaction is (6S)-NADHX + ADP = AMP + phosphate + NADH + H(+). The enzyme catalyses (6S)-NADPHX + ADP = AMP + phosphate + NADPH + H(+). It catalyses the reaction (6R)-NADHX = (6S)-NADHX. It carries out the reaction (6R)-NADPHX = (6S)-NADPHX. Its function is as follows. Bifunctional enzyme that catalyzes the epimerization of the S- and R-forms of NAD(P)HX and the dehydration of the S-form of NAD(P)HX at the expense of ADP, which is converted to AMP. This allows the repair of both epimers of NAD(P)HX, a damaged form of NAD(P)H that is a result of enzymatic or heat-dependent hydration. This Thermotoga maritima (strain ATCC 43589 / DSM 3109 / JCM 10099 / NBRC 100826 / MSB8) protein is Bifunctional NAD(P)H-hydrate repair enzyme Nnr (nnr).